A 453-amino-acid polypeptide reads, in one-letter code: MSFDLIIKNGTVILENEARVVDVAVKGGKIAAIGQDLGDAKEVMDASGLVVSPGMVDAHTHISEPGRSHWEGYETGTRAAAKGGITTMIEMPLNQLPATVDRASIELKFDAAKGKLTIDAAQLGGLVSYNIDRLHELDEVGVVGFKCFVATCGDRGIDNDFRDVNDWQFFKGAQKLGELGQPVLVHCENALICDELGEEAKREGRVTAHDYVASRPVFTEVEAIRRVLYLAKVAGCRLHVCHISSPEGVEEVTRARQEGQDVTCESCPHYFVLDTDQFEEIGTLAKCSPPIRDLENQKGMWEKLFNGEIDCLVSDHSPCPPEMKAGNIMKAWGGIAGLQSCMDVMFDEAVQKRGMSLPMFGKLMATNAADIFGLQQKGRIAPGKDADFVFIQPNSSYVLTNDDLEYRHKVSPYVGRTIGARITKTILRGDVIYDIEQGFPVAPKGQFILKHQQ.

6 residues coordinate Zn(2+): His-59, His-61, Lys-146, His-186, His-242, and Asp-315. Lys-146 bears the N6-carboxylysine mark.

Belongs to the metallo-dependent hydrolases superfamily. Allantoinase family. Homotetramer. Zn(2+) serves as cofactor. Post-translationally, carboxylation allows a single lysine to coordinate two zinc ions.

The enzyme catalyses (S)-allantoin + H2O = allantoate + H(+). Its pathway is nitrogen metabolism; (S)-allantoin degradation; allantoate from (S)-allantoin: step 1/1. In terms of biological role, catalyzes the conversion of allantoin (5-ureidohydantoin) to allantoic acid by hydrolytic cleavage of the five-member hydantoin ring. The sequence is that of Allantoinase from Escherichia coli (strain SMS-3-5 / SECEC).